Consider the following 211-residue polypeptide: Ribosomal RNA small subunit methyltransferase G (211 aa).

Residues G73, 125 to 126 (IE), and R141 contribute to the S-adenosyl-L-methionine site.

The protein belongs to the methyltransferase superfamily. RNA methyltransferase RsmG family.

The protein localises to the cytoplasm. The enzyme catalyses guanosine(527) in 16S rRNA + S-adenosyl-L-methionine = N(7)-methylguanosine(527) in 16S rRNA + S-adenosyl-L-homocysteine. In terms of biological role, specifically methylates the N7 position of guanine in position 527 of 16S rRNA. This Methylobacterium radiotolerans (strain ATCC 27329 / DSM 1819 / JCM 2831 / NBRC 15690 / NCIMB 10815 / 0-1) protein is Ribosomal RNA small subunit methyltransferase G.